The primary structure comprises 324 residues: Virulence-associated V antigen (324 aa).

It localises to the secreted. Possibly involved in calcium regulation of YOP expression, which includes the export process. The protein is Virulence-associated V antigen (lcrV) of Yersinia pestis (strain Pestoides F).